Reading from the N-terminus, the 171-residue chain is MQNSTCQAVGECRVPEHAVLPQPLYREVVQFIESLPQKEGHLVTVLHKAQSVFGYLPIEVQQFVADHMEVPLAQVYGVVSFYTFFTMVPKGKYPISVCMGTACFVKGADKVVHAFKEQLKIDIGDVTPDGRFSIDTLRCVGGCALAPIVMVGEKVYGNVTPGQVKKILAEY.

Positions 98, 103, 139, and 143 each coordinate [2Fe-2S] cluster.

This sequence belongs to the complex I 24 kDa subunit family. In terms of assembly, heterotetramer composed of HndA, HndB, HndC and HndD subunits. HndA and HndB could form a heterodimeric intermediate in the electron transfer between the active site of hydrogenase subunit HndD and the NADP reduction site of the reducing subunit HndC. [2Fe-2S] cluster is required as a cofactor.

It catalyses the reaction H2 + NADP(+) = NADPH + H(+). With respect to regulation, inhibited by oxygen. Catalyzes the reduction of NADP in the presence of molecular H(2) to yield NADPH. This Solidesulfovibrio fructosivorans (Desulfovibrio fructosivorans) protein is NADP-reducing hydrogenase subunit HndA (hndA).